A 156-amino-acid chain; its full sequence is Putative HTH-type transcriptional regulator YwgB (156 aa).

In terms of domain architecture, HTH rrf2-type spans 2 to 133 (KMKSGMEQAV…REESLQHVMD (132 aa)).

In Bacillus subtilis (strain 168), this protein is Putative HTH-type transcriptional regulator YwgB (ywgB).